A 1140-amino-acid polypeptide reads, in one-letter code: Condensin-2 complex subunit G2 (1140 aa).

The HEAT repeat unit spans residues 460–493; sequence LLPALKSSLHDSSEKVRVAFVGMLLKIKAARAAK.

As to quaternary structure, component of the condensin-2 complex, which contains the smc2 and smc4 heterodimer, and three non SMC subunits that probably regulate the complex: ncaph2, ncapd3 and ncapg2.

The protein resides in the nucleus. Its function is as follows. Regulatory subunit of the condensin-2 complex, a complex which establishes mitotic chromosome architecture and is involved in physical rigidity of the chromatid axis. Plays a role in the embryonic development of the head and kidney structures. This Danio rerio (Zebrafish) protein is Condensin-2 complex subunit G2.